A 384-amino-acid chain; its full sequence is L-cysteine:1D-myo-inositol 2-amino-2-deoxy-alpha-D-glucopyranoside ligase (384 aa).

Residue Cys16 coordinates Zn(2+). Residues 16-19, Thr31, and 54-56 each bind L-cysteinyl-5'-AMP; these read CGIT and NVT. Residues 18–28 carry the 'HIGH' region motif; that stretch reads ITPYDATHLGH. Positions 159–164 match the 'ERGGDP' region motif; the sequence is QSGGDP. Trp199 provides a ligand contact to L-cysteinyl-5'-AMP. Cys203 contacts Zn(2+). L-cysteinyl-5'-AMP is bound at residue 221-223; it reads GSD. His228 contributes to the Zn(2+) binding site. Ile255 contacts L-cysteinyl-5'-AMP. The short motif at 261–265 is the 'KMSKS' region element; the sequence is KMSKS.

The protein belongs to the class-I aminoacyl-tRNA synthetase family. MshC subfamily. In terms of assembly, monomer. It depends on Zn(2+) as a cofactor.

It catalyses the reaction 1D-myo-inositol 2-amino-2-deoxy-alpha-D-glucopyranoside + L-cysteine + ATP = 1D-myo-inositol 2-(L-cysteinylamino)-2-deoxy-alpha-D-glucopyranoside + AMP + diphosphate + H(+). Functionally, catalyzes the ATP-dependent condensation of GlcN-Ins and L-cysteine to form L-Cys-GlcN-Ins. This Mycobacterium leprae (strain Br4923) protein is L-cysteine:1D-myo-inositol 2-amino-2-deoxy-alpha-D-glucopyranoside ligase.